A 568-amino-acid chain; its full sequence is Type 3 secretion system secretin (568 aa).

An N-terminal signal peptide occupies residues 1-15; sequence MAAALLLWTAGTVCA. The interval 203 to 292 is disordered; it reads YGGDGPSDSG…RGSTPIIRAD (90 aa). The span at 243–257 shows a compositional bias: gly residues; that stretch reads LGGGKSPLPPGGTGQ. A compositionally biased stretch (basic and acidic residues) spans 273-284; it reads NRLRSDELDDRG.

Belongs to the bacterial secretin family. T3SS SctC subfamily. The core secretion machinery of the T3SS is composed of approximately 20 different proteins, including cytoplasmic components, a base, an export apparatus and a needle. This subunit is part of the base, which anchors the injectisome in the bacterial cell envelope. Forms a stable homooligomeric complex.

It is found in the cell outer membrane. Its function is as follows. Component of the type III secretion system (T3SS), also called injectisome, which is used to inject bacterial effector proteins into eukaryotic host cells. Forms a ring-shaped multimeric structure with an apparent central pore in the outer membrane. The polypeptide is Type 3 secretion system secretin (Ralstonia nicotianae (strain ATCC BAA-1114 / GMI1000) (Ralstonia solanacearum)).